The following is a 417-amino-acid chain: Gamma-glutamyl phosphate reductase (417 aa).

It belongs to the gamma-glutamyl phosphate reductase family.

The protein resides in the cytoplasm. It carries out the reaction L-glutamate 5-semialdehyde + phosphate + NADP(+) = L-glutamyl 5-phosphate + NADPH + H(+). It participates in amino-acid biosynthesis; L-proline biosynthesis; L-glutamate 5-semialdehyde from L-glutamate: step 2/2. Its function is as follows. Catalyzes the NADPH-dependent reduction of L-glutamate 5-phosphate into L-glutamate 5-semialdehyde and phosphate. The product spontaneously undergoes cyclization to form 1-pyrroline-5-carboxylate. The sequence is that of Gamma-glutamyl phosphate reductase from Idiomarina loihiensis (strain ATCC BAA-735 / DSM 15497 / L2-TR).